Consider the following 351-residue polypeptide: MDYRSAGVDIELGRAFVKGIRERVEGSQAQSSGSSGTLGGIGGFAGLLELPAGYRAPVLVAGTDGVGTKLEIAQQWGQHRGVGIDLVAMCVNDVLTVGARPLFFLDYIATGKLEPEALWQVIDGILEGCQEAGCQLLGGETAEMPGFYPPGKYDLAGFCVGIVERADVLDSSRVQLGDRLWALPSSGLHSNGFSLVRRIVAERGWPWDHQPPGWDRPLAEVFLTPTRIYVQAVQRLQAAGIPLHGMAHITGGGIPENLPRCLAPEQAARLEPHSWPIPPEFLWLQEQGQVETLEMFNTFNLGVGYVLVIPPEAENRLRSLLPEAFPIGEVVPARPGESRVLGLEEWGSLVP.

The protein belongs to the AIR synthase family.

Its subcellular location is the cytoplasm. It carries out the reaction 2-formamido-N(1)-(5-O-phospho-beta-D-ribosyl)acetamidine + ATP = 5-amino-1-(5-phospho-beta-D-ribosyl)imidazole + ADP + phosphate + H(+). The protein operates within purine metabolism; IMP biosynthesis via de novo pathway; 5-amino-1-(5-phospho-D-ribosyl)imidazole from N(2)-formyl-N(1)-(5-phospho-D-ribosyl)glycinamide: step 2/2. This Synechococcus sp. (strain JA-3-3Ab) (Cyanobacteria bacterium Yellowstone A-Prime) protein is Phosphoribosylformylglycinamidine cyclo-ligase.